The primary structure comprises 648 residues: Threonine--tRNA ligase (648 aa).

Positions 1 to 61 (MIKITLPDGS…TTDGNLILYT (61 aa)) constitute a TGS domain. The catalytic stretch occupies residues 240–539 (DHRKLGKELE…LLEHTAGNFP (300 aa)). Positions 335, 386, and 516 each coordinate Zn(2+).

Belongs to the class-II aminoacyl-tRNA synthetase family. Homodimer. It depends on Zn(2+) as a cofactor.

It is found in the cytoplasm. The enzyme catalyses tRNA(Thr) + L-threonine + ATP = L-threonyl-tRNA(Thr) + AMP + diphosphate + H(+). Catalyzes the attachment of threonine to tRNA(Thr) in a two-step reaction: L-threonine is first activated by ATP to form Thr-AMP and then transferred to the acceptor end of tRNA(Thr). Also edits incorrectly charged L-seryl-tRNA(Thr). This Flavobacterium johnsoniae (strain ATCC 17061 / DSM 2064 / JCM 8514 / BCRC 14874 / CCUG 350202 / NBRC 14942 / NCIMB 11054 / UW101) (Cytophaga johnsonae) protein is Threonine--tRNA ligase.